A 207-amino-acid polypeptide reads, in one-letter code: Ribonuclease HII (207 aa).

One can recognise an RNase H type-2 domain in the interval 18–207 (TYLSGSDEAG…PIKKISKETS (190 aa)). A divalent metal cation-binding residues include D24, E25, and D116.

This sequence belongs to the RNase HII family. Mn(2+) is required as a cofactor. Requires Mg(2+) as cofactor.

It localises to the cytoplasm. It catalyses the reaction Endonucleolytic cleavage to 5'-phosphomonoester.. In terms of biological role, endonuclease that specifically degrades the RNA of RNA-DNA hybrids. This is Ribonuclease HII from Mycoplasma capricolum subsp. capricolum (strain California kid / ATCC 27343 / NCTC 10154).